The primary structure comprises 198 residues: Large ribosomal subunit protein bL25 (198 aa).

Belongs to the bacterial ribosomal protein bL25 family. CTC subfamily. Part of the 50S ribosomal subunit; part of the 5S rRNA/L5/L18/L25 subcomplex. Contacts the 5S rRNA. Binds to the 5S rRNA independently of L5 and L18.

In terms of biological role, this is one of the proteins that binds to the 5S RNA in the ribosome where it forms part of the central protuberance. The chain is Large ribosomal subunit protein bL25 from Nitrosomonas europaea (strain ATCC 19718 / CIP 103999 / KCTC 2705 / NBRC 14298).